Reading from the N-terminus, the 526-residue chain is Light-independent protochlorophyllide reductase subunit B (526 aa).

Aspartate 36 lines the [4Fe-4S] cluster pocket. Catalysis depends on aspartate 290, which acts as the Proton donor. A substrate-binding site is contributed by 425–426 (GL).

The protein belongs to the ChlB/BchB/BchZ family. Protochlorophyllide reductase is composed of three subunits; ChlL, ChlN and ChlB. Forms a heterotetramer of two ChlB and two ChlN subunits. It depends on [4Fe-4S] cluster as a cofactor.

It catalyses the reaction chlorophyllide a + oxidized 2[4Fe-4S]-[ferredoxin] + 2 ADP + 2 phosphate = protochlorophyllide a + reduced 2[4Fe-4S]-[ferredoxin] + 2 ATP + 2 H2O. It functions in the pathway porphyrin-containing compound metabolism; chlorophyll biosynthesis (light-independent). Functionally, component of the dark-operative protochlorophyllide reductase (DPOR) that uses Mg-ATP and reduced ferredoxin to reduce ring D of protochlorophyllide (Pchlide) to form chlorophyllide a (Chlide). This reaction is light-independent. The NB-protein (ChlN-ChlB) is the catalytic component of the complex. The sequence is that of Light-independent protochlorophyllide reductase subunit B from Prochlorococcus marinus (strain MIT 9515).